Here is a 394-residue protein sequence, read N- to C-terminus: MSQLETRTEPMVVNFGPHHPSMHGVLRLVVTLDGEDVVDCEPVIGYLHRGMEKIAENRTSVMFVPYVSRMDYAAGMFYEAIVVNAPERLANISVPKRASYIRVVMLELNRIANHLLWLGPFLADVGAQTPFFYIFREREMIYDLWEAATGQRLINNNYFRIGGVACDLPWGWLEKCQDFCDWFGPKIDEYEKLITNNPIFRRRIEGLGAIGRDEAINWSLSGPMLRASGVPWDLRKVDHYECYDDFDWDVAWEKEGDCYARYRVRIEEMRQSLKILRQACEMIPGGPTENLEAQRMAEGKKSPFTGFDYQYVSKKVAPTFKIPNGELYTRLESGKGEIGVFLQGNNDVTPWRFKIRAADLNNLQILPHILKGAKVADIMAILGSIDVIMGSVDR.

Belongs to the complex I 49 kDa subunit family. In terms of assembly, NDH-1 can be composed of about 15 different subunits; different subcomplexes with different compositions have been identified which probably have different functions.

Its subcellular location is the cellular thylakoid membrane. The catalysed reaction is a plastoquinone + NADH + (n+1) H(+)(in) = a plastoquinol + NAD(+) + n H(+)(out). The enzyme catalyses a plastoquinone + NADPH + (n+1) H(+)(in) = a plastoquinol + NADP(+) + n H(+)(out). In terms of biological role, NDH-1 shuttles electrons from an unknown electron donor, via FMN and iron-sulfur (Fe-S) centers, to quinones in the respiratory and/or the photosynthetic chain. The immediate electron acceptor for the enzyme in this species is believed to be plastoquinone. Couples the redox reaction to proton translocation, and thus conserves the redox energy in a proton gradient. Cyanobacterial NDH-1 also plays a role in inorganic carbon-concentration. The protein is NAD(P)H-quinone oxidoreductase subunit H of Prochlorococcus marinus (strain MIT 9303).